The following is a 282-amino-acid chain: Bis(5'-nucleosyl)-tetraphosphatase, symmetrical (282 aa).

It belongs to the Ap4A hydrolase family.

The catalysed reaction is P(1),P(4)-bis(5'-adenosyl) tetraphosphate + H2O = 2 ADP + 2 H(+). In terms of biological role, hydrolyzes diadenosine 5',5'''-P1,P4-tetraphosphate to yield ADP. This is Bis(5'-nucleosyl)-tetraphosphatase, symmetrical from Salmonella paratyphi C (strain RKS4594).